We begin with the raw amino-acid sequence, 111 residues long: Phosphoribosyl-ATP pyrophosphatase (111 aa).

Belongs to the PRA-PH family.

It localises to the cytoplasm. It carries out the reaction 1-(5-phospho-beta-D-ribosyl)-ATP + H2O = 1-(5-phospho-beta-D-ribosyl)-5'-AMP + diphosphate + H(+). The protein operates within amino-acid biosynthesis; L-histidine biosynthesis; L-histidine from 5-phospho-alpha-D-ribose 1-diphosphate: step 2/9. This Ectopseudomonas mendocina (strain ymp) (Pseudomonas mendocina) protein is Phosphoribosyl-ATP pyrophosphatase.